The primary structure comprises 360 residues: Probable L-asparaginase 1 (360 aa).

Positions 1 to 16 are cleaved as a signal peptide; sequence MWRSIISFLFFSVALC. 3 N-linked (GlcNAc...) asparagine glycosylation sites follow: asparagine 27, asparagine 35, and asparagine 40. The Asparaginase/glutaminase domain occupies 39–359; it reads PNVTIFAMGG…QNITDIFSLE (321 aa). The active-site O-isoaspartyl threonine intermediate is threonine 49. Asparagine 82 carries an N-linked (GlcNAc...) asparagine glycan. Serine 96 serves as a coordination point for substrate. Residue asparagine 106 is glycosylated (N-linked (GlcNAc...) asparagine). 129 to 130 contacts substrate; that stretch reads TD. Asparagine 144, asparagine 179, asparagine 246, asparagine 302, and asparagine 351 each carry an N-linked (GlcNAc...) asparagine glycan.

The protein belongs to the asparaginase 1 family.

The protein resides in the secreted. The protein localises to the cell wall. The catalysed reaction is L-asparagine + H2O = L-aspartate + NH4(+). This chain is Probable L-asparaginase 1, found in Schizosaccharomyces pombe (strain 972 / ATCC 24843) (Fission yeast).